Reading from the N-terminus, the 457-residue chain is tRNA-2-methylthio-N(6)-dimethylallyladenosine synthase (457 aa).

Residues 18–133 form the MTTase N-terminal domain; the sequence is KKLFIETYGC…LPELIASVEA (116 aa). Positions 27, 63, 97, 171, 175, and 178 each coordinate [4Fe-4S] cluster. In terms of domain architecture, Radical SAM core spans 157–390; sequence CGNHISGFVS…IALQNRLSAE (234 aa). The TRAM domain occupies 393 to 456; the sequence is NRCIGKTYEV…SATLKGEEVF (64 aa).

It belongs to the methylthiotransferase family. MiaB subfamily. In terms of assembly, monomer. The cofactor is [4Fe-4S] cluster.

The protein resides in the cytoplasm. It carries out the reaction N(6)-dimethylallyladenosine(37) in tRNA + (sulfur carrier)-SH + AH2 + 2 S-adenosyl-L-methionine = 2-methylsulfanyl-N(6)-dimethylallyladenosine(37) in tRNA + (sulfur carrier)-H + 5'-deoxyadenosine + L-methionine + A + S-adenosyl-L-homocysteine + 2 H(+). Functionally, catalyzes the methylthiolation of N6-(dimethylallyl)adenosine (i(6)A), leading to the formation of 2-methylthio-N6-(dimethylallyl)adenosine (ms(2)i(6)A) at position 37 in tRNAs that read codons beginning with uridine. The protein is tRNA-2-methylthio-N(6)-dimethylallyladenosine synthase of Bacteroides fragilis (strain ATCC 25285 / DSM 2151 / CCUG 4856 / JCM 11019 / LMG 10263 / NCTC 9343 / Onslow / VPI 2553 / EN-2).